Reading from the N-terminus, the 425-residue chain is Glutamyl-tRNA(Gln) amidotransferase subunit D (425 aa).

A disordered region spans residues 53 to 84 (ENNGEAANGGNGGKNGQKEPEPAKEKVSKPGL). The segment covering 68–80 (GQKEPEPAKEKVS) has biased composition (basic and acidic residues). Residues 85-414 (PKVSILSTGG…EKAVSMLGEN (330 aa)) form the Asparaginase/glutaminase domain. Residues threonine 95, threonine 171, aspartate 172, and lysine 248 contribute to the active site.

The protein belongs to the asparaginase 1 family. GatD subfamily. As to quaternary structure, heterodimer of GatD and GatE.

It carries out the reaction L-glutamyl-tRNA(Gln) + L-glutamine + ATP + H2O = L-glutaminyl-tRNA(Gln) + L-glutamate + ADP + phosphate + H(+). In terms of biological role, allows the formation of correctly charged Gln-tRNA(Gln) through the transamidation of misacylated Glu-tRNA(Gln) in organisms which lack glutaminyl-tRNA synthetase. The reaction takes place in the presence of glutamine and ATP through an activated gamma-phospho-Glu-tRNA(Gln). The GatDE system is specific for glutamate and does not act on aspartate. In Methanosarcina mazei (strain ATCC BAA-159 / DSM 3647 / Goe1 / Go1 / JCM 11833 / OCM 88) (Methanosarcina frisia), this protein is Glutamyl-tRNA(Gln) amidotransferase subunit D.